Here is a 191-residue protein sequence, read N- to C-terminus: Imidazoleglycerol-phosphate dehydratase (191 aa).

Belongs to the imidazoleglycerol-phosphate dehydratase family.

The protein resides in the cytoplasm. It carries out the reaction D-erythro-1-(imidazol-4-yl)glycerol 3-phosphate = 3-(imidazol-4-yl)-2-oxopropyl phosphate + H2O. The protein operates within amino-acid biosynthesis; L-histidine biosynthesis; L-histidine from 5-phospho-alpha-D-ribose 1-diphosphate: step 6/9. The protein is Imidazoleglycerol-phosphate dehydratase of Methanococcoides burtonii (strain DSM 6242 / NBRC 107633 / OCM 468 / ACE-M).